The chain runs to 155 residues: Ribonuclease H (155 aa).

The region spanning 1 to 142 (MLKQVEIFTD…CDVLARDAAS (142 aa)) is the RNase H type-1 domain. Mg(2+) contacts are provided by aspartate 10, glutamate 48, aspartate 70, and aspartate 134.

Belongs to the RNase H family. As to quaternary structure, monomer. It depends on Mg(2+) as a cofactor.

The protein resides in the cytoplasm. It catalyses the reaction Endonucleolytic cleavage to 5'-phosphomonoester.. Endonuclease that specifically degrades the RNA of RNA-DNA hybrids. This Serratia proteamaculans (strain 568) protein is Ribonuclease H.